Consider the following 107-residue polypeptide: SH3 domain-binding glutamic acid-rich-like protein 2 (107 aa).

The SH3-binding signature appears at 61 to 67 (QGNPLPP).

This sequence belongs to the SH3BGR family. In terms of tissue distribution, highly expressed in brain, placenta, liver and kidney. Expressed in retina.

The protein resides in the nucleus. This Homo sapiens (Human) protein is SH3 domain-binding glutamic acid-rich-like protein 2 (SH3BGRL2).